We begin with the raw amino-acid sequence, 332 residues long: tRNA N6-adenosine threonylcarbamoyltransferase (332 aa).

Fe cation is bound by residues His107 and His111. Substrate is bound by residues 129–133 (LVSGG), Asp162, Gly175, and Asn267. Asp295 serves as a coordination point for Fe cation.

It belongs to the KAE1 / TsaD family. The cofactor is Fe(2+).

The protein localises to the cytoplasm. The catalysed reaction is L-threonylcarbamoyladenylate + adenosine(37) in tRNA = N(6)-L-threonylcarbamoyladenosine(37) in tRNA + AMP + H(+). Required for the formation of a threonylcarbamoyl group on adenosine at position 37 (t(6)A37) in tRNAs that read codons beginning with adenine. Is involved in the transfer of the threonylcarbamoyl moiety of threonylcarbamoyl-AMP (TC-AMP) to the N6 group of A37, together with TsaE and TsaB. TsaD likely plays a direct catalytic role in this reaction. The chain is tRNA N6-adenosine threonylcarbamoyltransferase from Campylobacter hominis (strain ATCC BAA-381 / DSM 21671 / CCUG 45161 / LMG 19568 / NCTC 13146 / CH001A).